Consider the following 269-residue polypeptide: MASEIKKKLFWRAVVAEFLAMTLFVFISIGSALGFNYPLERNQTLVQDNVKVSLAFGLSIATLAQSVGHISGAHLNPAVTLGLLLSCQISILRAVMYIIAQCVGAIVASAILSGITSSLLENSLGRNDLARGVNSGQGLGIEIIGTLQLVLCVLATTDRRRRDLGGSAPLAIGLSVALGHLLAIDYTGCGINPARSFGSAVLTRNFSNHWIFWVGPFIGSALAVLIYDFILAPRSSDFTDRMKVWTSGQVEEYDLDADDINSRVEMKPK.

The Cytoplasmic portion of the chain corresponds to 1-11; it reads MASEIKKKLFW. The helical transmembrane segment at 12-29 threads the bilayer; it reads RAVVAEFLAMTLFVFISI. The Extracellular portion of the chain corresponds to 30 to 46; sequence GSALGFNYPLERNQTLV. N42 carries N-linked (GlcNAc...) asparagine glycosylation. Residues 47 to 65 form a helical membrane-spanning segment; that stretch reads QDNVKVSLAFGLSIATLAQ. Over 66–68 the chain is Cytoplasmic; sequence SVG. Residues 69–82 lie within the membrane without spanning it; that stretch reads HISGAHLNPAVTLG. Residues 76–78 carry the NPA 1 motif; it reads NPA. The Cytoplasmic portion of the chain corresponds to 83–90; the sequence is LLLSCQIS. The chain crosses the membrane as a helical span at residues 91 to 109; the sequence is ILRAVMYIIAQCVGAIVAS. The Extracellular segment spans residues 110-133; it reads AILSGITSSLLENSLGRNDLARGV. Residues 134-153 traverse the membrane as a helical segment; sequence NSGQGLGIEIIGTLQLVLCV. Residues 154 to 163 are Cytoplasmic-facing; the sequence is LATTDRRRRD. Residues 164-181 form a helical membrane-spanning segment; that stretch reads LGGSAPLAIGLSVALGHL. The Extracellular segment spans residues 182–186; that stretch reads LAIDY. An intramembrane segment occupies 187 to 199; sequence TGCGINPARSFGS. Positions 192 to 194 match the NPA 2 motif; the sequence is NPA. Residues 200 to 206 lie on the Extracellular side of the membrane; that stretch reads AVLTRNF. N205 is a glycosylation site (N-linked (GlcNAc...) asparagine). Residues 207 to 224 form a helical membrane-spanning segment; it reads SNHWIFWVGPFIGSALAV. Residues 225 to 269 are Cytoplasmic-facing; sequence LIYDFILAPRSSDFTDRMKVWTSGQVEEYDLDADDINSRVEMKPK. S247 bears the Phosphoserine mark. Position 253 is a phosphotyrosine (Y253). At S262 the chain carries Phosphoserine.

It belongs to the MIP/aquaporin (TC 1.A.8) family. Homotetramer; each monomer provides an independent water pore. Component of the ankyrin-1 complex in the erythrocyte, composed of ANK1, RHCE, RHAG, SLC4A1, EPB42, GYPA, GYPB and AQP1. Interacts with EPHB2; involved in endolymph production in the inner ear. Identified in a complex with STOM. Interacts (via the N-terminal) with ANK1 (via ANK 1-5 repeats). Interacts (via the C-terminal) with EPB42. In terms of tissue distribution, erythrocytes and renal tubules.

It is found in the cell membrane. The enzyme catalyses H2O(in) = H2O(out). The catalysed reaction is nitric oxide(out) = nitric oxide(in). It carries out the reaction CO2(out) = CO2(in). It catalyses the reaction glycerol(in) = glycerol(out). The enzyme catalyses H2O2(out) = H2O2(in). The catalysed reaction is K(+)(in) = K(+)(out). It carries out the reaction Na(+)(in) = Na(+)(out). Its function is as follows. Forms a water channel that facilitates the transport of water across cell membranes, playing a crucial role in water homeostasis in various tissues. Could also be permeable to small solutes including hydrogen peroxide, glycerol and gases such as amonnia (NH3), nitric oxide (NO) and carbon dioxide (CO2). Recruited to the ankyrin-1 complex, a multiprotein complex of the erythrocyte membrane, it could be part of a CO2 metabolon, linking facilitated diffusion of CO2 across the membrane, anion exchange of Cl(-)/HCO3(-) and interconversion of dissolved CO2 and carbonic acid in the cytosol. In vitro, it shows non-selective gated cation channel activity and may be permeable to cations like K(+) and Na(+) in vivo. This chain is Aquaporin-1, found in Rattus norvegicus (Rat).